The following is a 168-amino-acid chain: Transcriptional regulator MraZ (168 aa).

SpoVT-AbrB domains lie at 8-51 and 90-140; these read EYNQ…GGDR and ALNM…KADT.

It belongs to the MraZ family. In terms of assembly, forms oligomers.

The protein resides in the cytoplasm. The protein localises to the nucleoid. This Cereibacter sphaeroides (strain ATCC 17025 / ATH 2.4.3) (Rhodobacter sphaeroides) protein is Transcriptional regulator MraZ.